The chain runs to 686 residues: Terminal beta-(1-&gt;2)-arabinofuranosyltransferase (686 aa).

The disordered stretch occupies residues 1 to 42 (MTFSPQRPEFETGKQPDPETEHAGDFFEETSSSAPRAASNGS). Basic and acidic residues predominate over residues 8 to 25 (PEFETGKQPDPETEHAGD). Positions 29-42 (ETSSSAPRAASNGS) are enriched in polar residues. Helical transmembrane passes span 48 to 68 (TLITTFLAALTAGIFAFWAGW), 127 to 147 (IALWLALLFTTAASIIGVLGT), 155 to 175 (IAVLLPAGVIGYFSLSPARDF), 180 to 200 (LEWGLSLMWISIQWLLLVLWA), 219 to 239 (IVNAGAITYALAFWSGLSWLV), 261 to 281 (WRVVLGILVAALPLPAAYQIF), 316 to 336 (GPYNLWLGLALLLAAGALTVW), 353 to 373 (TPGMAIALLVICALVHFLYVI), 384 to 404 (MLLLPLFAILLPVSVIPVNVV), and 411 to 431 (LVALVLVFSTWVWSTVVFVQG).

Belongs to the AftB family.

Its subcellular location is the membrane. Its pathway is cell wall biogenesis; cell wall polysaccharide biosynthesis. Its function is as follows. Involved in the biosynthesis of the arabinogalactan (AG) region of the mycolylarabinogalactan-peptidoglycan (mAGP) complex, an essential component of the cell wall. Catalyzes the transfer of arabinofuranosyl (Araf) residues from the sugar donor decaprenyl-phospho-arabinose (DPA) to the arabinan domain to form terminal beta-(1-&gt;2)-linked Araf residues, which marks the end point for AG arabinan biosynthesis before decoration with mycolic acids. The polypeptide is Terminal beta-(1-&gt;2)-arabinofuranosyltransferase (aftB) (Corynebacterium glutamicum (strain ATCC 13032 / DSM 20300 / JCM 1318 / BCRC 11384 / CCUG 27702 / LMG 3730 / NBRC 12168 / NCIMB 10025 / NRRL B-2784 / 534)).